The sequence spans 254 residues: NAD kinase (254 aa).

D44 serves as the catalytic Proton acceptor. Residues 44-45 (DG), 114-115 (NE), D144, A152, 155-160 (TAYNYS), and A179 contribute to the NAD(+) site.

This sequence belongs to the NAD kinase family. It depends on a divalent metal cation as a cofactor.

The protein localises to the cytoplasm. The enzyme catalyses NAD(+) + ATP = ADP + NADP(+) + H(+). Functionally, involved in the regulation of the intracellular balance of NAD and NADP, and is a key enzyme in the biosynthesis of NADP. Catalyzes specifically the phosphorylation on 2'-hydroxyl of the adenosine moiety of NAD to yield NADP. The protein is NAD kinase of Cereibacter sphaeroides (strain ATCC 17025 / ATH 2.4.3) (Rhodobacter sphaeroides).